Here is a 169-residue protein sequence, read N- to C-terminus: Small ribosomal subunit protein uS5 (169 aa).

The 64-residue stretch at 14-77 (LQEKVVEVRR…EDAKKNLIVV (64 aa)) folds into the S5 DRBM domain.

This sequence belongs to the universal ribosomal protein uS5 family. Part of the 30S ribosomal subunit. Contacts proteins S4 and S8.

Its function is as follows. With S4 and S12 plays an important role in translational accuracy. Functionally, located at the back of the 30S subunit body where it stabilizes the conformation of the head with respect to the body. This chain is Small ribosomal subunit protein uS5, found in Clostridioides difficile (strain 630) (Peptoclostridium difficile).